The chain runs to 100 residues: Urease subunit gamma (100 aa).

It belongs to the urease gamma subunit family. Heterotrimer of UreA (gamma), UreB (beta) and UreC (alpha) subunits. Three heterotrimers associate to form the active enzyme.

The protein localises to the cytoplasm. The catalysed reaction is urea + 2 H2O + H(+) = hydrogencarbonate + 2 NH4(+). It participates in nitrogen metabolism; urea degradation; CO(2) and NH(3) from urea (urease route): step 1/1. This chain is Urease subunit gamma, found in Teredinibacter turnerae (strain ATCC 39867 / T7901).